A 146-amino-acid chain; its full sequence is 3-hydroxyacyl-[acyl-carrier-protein] dehydratase FabZ (146 aa).

Histidine 49 is a catalytic residue.

It belongs to the thioester dehydratase family. FabZ subfamily.

Its subcellular location is the cytoplasm. The catalysed reaction is a (3R)-hydroxyacyl-[ACP] = a (2E)-enoyl-[ACP] + H2O. Its function is as follows. Involved in unsaturated fatty acids biosynthesis. Catalyzes the dehydration of short chain beta-hydroxyacyl-ACPs and long chain saturated and unsaturated beta-hydroxyacyl-ACPs. The chain is 3-hydroxyacyl-[acyl-carrier-protein] dehydratase FabZ from Pseudomonas savastanoi pv. phaseolicola (strain 1448A / Race 6) (Pseudomonas syringae pv. phaseolicola (strain 1448A / Race 6)).